The following is a 643-amino-acid chain: 1-deoxy-D-xylulose-5-phosphate synthase (643 aa).

Residues His78 and 119 to 121 (AHS) contribute to the thiamine diphosphate site. Asp150 provides a ligand contact to Mg(2+). Thiamine diphosphate contacts are provided by residues 151-152 (GS), Asn179, Tyr288, and Glu370. Position 179 (Asn179) interacts with Mg(2+).

The protein belongs to the transketolase family. DXPS subfamily. Homodimer. It depends on Mg(2+) as a cofactor. The cofactor is thiamine diphosphate.

The enzyme catalyses D-glyceraldehyde 3-phosphate + pyruvate + H(+) = 1-deoxy-D-xylulose 5-phosphate + CO2. Its pathway is metabolic intermediate biosynthesis; 1-deoxy-D-xylulose 5-phosphate biosynthesis; 1-deoxy-D-xylulose 5-phosphate from D-glyceraldehyde 3-phosphate and pyruvate: step 1/1. Functionally, catalyzes the acyloin condensation reaction between C atoms 2 and 3 of pyruvate and glyceraldehyde 3-phosphate to yield 1-deoxy-D-xylulose-5-phosphate (DXP). The polypeptide is 1-deoxy-D-xylulose-5-phosphate synthase (Brucella melitensis biotype 2 (strain ATCC 23457)).